A 364-amino-acid polypeptide reads, in one-letter code: Aspartate aminotransferase (364 aa).

The L-aspartate site is built by G23, W99, and N143. K200 is modified (N6-(pyridoxal phosphate)lysine). R320 contributes to the L-aspartate binding site.

Belongs to the class-I pyridoxal-phosphate-dependent aminotransferase family. In terms of assembly, homodimer. It depends on pyridoxal 5'-phosphate as a cofactor.

It is found in the cytoplasm. It catalyses the reaction L-aspartate + 2-oxoglutarate = oxaloacetate + L-glutamate. This Thermococcus kodakarensis (strain ATCC BAA-918 / JCM 12380 / KOD1) (Pyrococcus kodakaraensis (strain KOD1)) protein is Aspartate aminotransferase (aspC).